The sequence spans 290 residues: Metallo-beta-lactamase L1 type 3 (290 aa).

The first 21 residues, 1-21, serve as a signal peptide directing secretion; it reads MRSTLLAFALAVALPAAHTSA. Residues 22 to 33 constitute a propeptide that is removed on maturation; it reads AEVPLPQLRAYT. Zn(2+) contacts are provided by histidine 105, histidine 107, aspartate 109, histidine 110, and histidine 181. Aspartate 205 is a binding site for substrate. Cysteine 239 and cysteine 267 are oxidised to a cystine. Histidine 246 lines the Zn(2+) pocket.

It belongs to the metallo-beta-lactamase superfamily. Class-B beta-lactamase family. As to quaternary structure, homotetramer. It depends on Zn(2+) as a cofactor.

The protein localises to the periplasm. The catalysed reaction is a beta-lactam + H2O = a substituted beta-amino acid. With respect to regulation, inhibited by Hg(2+) or Cu(2+), and by chelating agents such as EDTA and O-phenanthroline. Reduced enzymatic activity in presence of cobalt, nickel, cadmium, and manganese. Functionally, confers resistance to the different beta-lactams antibiotics (penicillin, cephalosporin and carbapenem) via the hydrolysis of the beta-lactam ring. This is Metallo-beta-lactamase L1 type 3 from Stenotrophomonas maltophilia (Pseudomonas maltophilia).